The sequence spans 404 residues: Cysteine desulfurase IscS (404 aa).

Pyridoxal 5'-phosphate contacts are provided by residues 75–76 (AT), Asn-155, Gln-183, and 203–205 (SGH). Lys-206 carries the post-translational modification N6-(pyridoxal phosphate)lysine. Position 243 (Thr-243) interacts with pyridoxal 5'-phosphate. Cys-328 acts as the Cysteine persulfide intermediate in catalysis. Residue Cys-328 coordinates [2Fe-2S] cluster.

The protein belongs to the class-V pyridoxal-phosphate-dependent aminotransferase family. NifS/IscS subfamily. As to quaternary structure, homodimer. Forms a heterotetramer with IscU, interacts with other sulfur acceptors. Requires pyridoxal 5'-phosphate as cofactor.

Its subcellular location is the cytoplasm. The enzyme catalyses (sulfur carrier)-H + L-cysteine = (sulfur carrier)-SH + L-alanine. Its pathway is cofactor biosynthesis; iron-sulfur cluster biosynthesis. Its function is as follows. Master enzyme that delivers sulfur to a number of partners involved in Fe-S cluster assembly, tRNA modification or cofactor biosynthesis. Catalyzes the removal of elemental sulfur atoms from cysteine to produce alanine. Functions as a sulfur delivery protein for Fe-S cluster synthesis onto IscU, an Fe-S scaffold assembly protein, as well as other S acceptor proteins. The protein is Cysteine desulfurase IscS of Mannheimia succiniciproducens (strain KCTC 0769BP / MBEL55E).